The primary structure comprises 874 residues: Ectonucleotide pyrophosphatase/phosphodiesterase family member 3 (874 aa).

At 1-11 (MDSRLALATEE) the chain is on the cytoplasmic side. The chain crosses the membrane as a helical; Signal-anchor for type II membrane protein span at residues 12-30 (PIKKDSLKKYKILCVVLLA). The Extracellular portion of the chain corresponds to 31-874 (LLVIVSLGLG…TYLPTFETII (844 aa)). SMB domains follow at residues 51–93 (QGSC…VKST) and 94–138 (QIWT…GESP). Intrachain disulfides connect Cys54–Cys58, Cys54–Cys71, Cys58–Cys89, Cys69–Cys71, Cys69–Cys82, Cys75–Cys81, Cys82–Cys89, Cys98–Cys115, Cys103–Cys133, Cys113–Cys126, Cys119–Cys125, Cys144–Cys190, and Cys152–Cys364. Residues 78–80 (RGD) carry the Cell attachment site motif. The interval 160-544 (PVILFSMDGF…HGSLNHLLKT (385 aa)) is phosphodiesterase. Asp167 contributes to the Zn(2+) binding site. Residue Lys204 participates in ATP binding. Residue Thr205 participates in Zn(2+) binding. Catalysis depends on Thr205, which acts as the Nucleophile. Asn226 contacts ATP. Asn236 is a glycosylation site (N-linked (GlcNAc...) asparagine). Asp275 contacts ATP. Residues Asn279 and Asn288 are each glycosylated (N-linked (GlcNAc...) asparagine). Residue Tyr289 participates in ATP binding. Positions 325, 329, 372, and 373 each coordinate Zn(2+). Disulfide bonds link Cys380–Cys477, Cys428–Cys817, Cys561–Cys623, Cys574–Cys679, Cys576–Cys664, and Cys786–Cys796. An N-linked (GlcNAc...) asparagine glycan is attached at Asn425. His482 contributes to the Zn(2+) binding site. Asn532, Asn594, Asn687, and Asn701 each carry an N-linked (GlcNAc...) asparagine glycan. The interval 581–874 (NTPGLEEQAN…TYLPTFETII (294 aa)) is nuclease. Ca(2+) contacts are provided by Asp751, Asn753, Asp755, His757, and Asp759. Asn820 carries an N-linked (GlcNAc...) asparagine glycan.

Monomer and homodimer. The cofactor is Zn(2+). Post-translationally, N-glycosylated. N-glycosylation is necessary for normal transport to the cell membrane, but is not the apical targeting signal. As to expression, detected at the tip of villi in the small intestine. Detected on basophils and mast cells (at protein level). Detected in the epithelial layer of the small intestine; expression is higher in the proximal part and lower in the distal part of the small intestine.

The protein localises to the cell membrane. It localises to the apical cell membrane. The protein resides in the secreted. The enzyme catalyses a ribonucleoside 5'-triphosphate + H2O = a ribonucleoside 5'-phosphate + diphosphate + H(+). It carries out the reaction UDP-N-acetyl-alpha-D-glucosamine + H2O = N-acetyl-alpha-D-glucosamine 1-phosphate + UMP + 2 H(+). The catalysed reaction is ATP + H2O = AMP + diphosphate + H(+). It catalyses the reaction CTP + H2O = CMP + diphosphate + H(+). The enzyme catalyses GTP + H2O = GMP + diphosphate + H(+). It carries out the reaction UTP + H2O = UMP + diphosphate + H(+). The catalysed reaction is Hydrolytically removes 5'-nucleotides successively from the 3'-hydroxy termini of 3'-hydroxy-terminated oligonucleotides.. It catalyses the reaction P(1),P(3)-bis(5'-adenosyl) triphosphate + H2O = AMP + ADP + 2 H(+). The enzyme catalyses P(1),P(4)-bis(5'-adenosyl) tetraphosphate + H2O = AMP + ATP + 2 H(+). It carries out the reaction P(1),P(5)-bis(5'-adenosyl) pentaphosphate + H2O = adenosine 5'-tetraphosphate + AMP + 2 H(+). The catalysed reaction is P(1),P(4)-bis(5'-guanosyl) tetraphosphate + H2O = GMP + GTP + 2 H(+). In terms of biological role, hydrolase that metabolizes extracellular nucleotides, including ATP, GTP, UTP and CTP. Limits mast cells and basophils response during inflammation and during the chronic phases of allergic responses by eliminating extracellular ATP, a signaling molecule activating these cells in an autocrine manner. Metabolizes extracellular ATP in the lumen of the small intestine, and thereby prevents ATP-induced apoptosis of intestinal plasmacytoid dendritic cells. Has a broad specificity and can also hydrolyze UDP-GlcNAc into UMP and GlcNAc-1-phosphate and potentially several other intracellular nucleotide sugars, including UDP-GalNAc, CMP-NeuAc, GDP-Fuc, and UDP-GlcA. Thereby, could modulate glycan biosynthesis and protein glycosylation. Can hydrolyze extracellular dinucleoside polyphosphates, including the vasoactive adenosine polyphosphates as well. In addition, displays an alkaline phosphodiesterase activity in vitro. The sequence is that of Ectonucleotide pyrophosphatase/phosphodiesterase family member 3 from Mus musculus (Mouse).